A 441-amino-acid polypeptide reads, in one-letter code: Amino-acid acetyltransferase (441 aa).

The N-acetyltransferase domain maps to 295-434 (EQVRRATIND…QELYNYQRRS (140 aa)).

Belongs to the acetyltransferase family. ArgA subfamily. In terms of assembly, homohexamer.

It localises to the cytoplasm. It carries out the reaction L-glutamate + acetyl-CoA = N-acetyl-L-glutamate + CoA + H(+). The protein operates within amino-acid biosynthesis; L-arginine biosynthesis; N(2)-acetyl-L-ornithine from L-glutamate: step 1/4. This chain is Amino-acid acetyltransferase, found in Yersinia enterocolitica serotype O:8 / biotype 1B (strain NCTC 13174 / 8081).